Reading from the N-terminus, the 467-residue chain is Glutamate--tRNA ligase (467 aa).

The 'HIGH' region motif lies at 13–23; that stretch reads PSPTGYLHVGG. The 'KMSKS' region signature appears at 245–249; it reads KLSKR. Lysine 248 is a binding site for ATP.

It belongs to the class-I aminoacyl-tRNA synthetase family. Glutamate--tRNA ligase type 1 subfamily. Monomer.

It localises to the cytoplasm. The catalysed reaction is tRNA(Glu) + L-glutamate + ATP = L-glutamyl-tRNA(Glu) + AMP + diphosphate. Its function is as follows. Catalyzes the attachment of glutamate to tRNA(Glu) in a two-step reaction: glutamate is first activated by ATP to form Glu-AMP and then transferred to the acceptor end of tRNA(Glu). In Herminiimonas arsenicoxydans, this protein is Glutamate--tRNA ligase.